Consider the following 297-residue polypeptide: uncharacterized protein (297 aa).

Residues 191–211 (VMIILSCSNITILAVLSIVGL) traverse the membrane as a helical segment. Residues 275–287 (SKTSETQSVSGST) show a composition bias toward polar residues. Positions 275–297 (SKTSETQSVSGSTHSDEKLTAPM) are disordered. Residues 288–297 (HSDEKLTAPM) show a composition bias toward basic and acidic residues.

The protein resides in the host membrane. This is an uncharacterized protein from Cryphonectria parasitica mycoreovirus 1 (strain 9B21) (CpMYRV-1).